The following is a 199-amino-acid chain: Recombination protein RecR (199 aa).

The segment at 58-73 (CSVCFTLSDTPVCAIC) adopts a C4-type zinc-finger fold. Residues 81–176 (SLLCVVEGPT…TVTRIASGMP (96 aa)) enclose the Toprim domain.

This sequence belongs to the RecR family.

Functionally, may play a role in DNA repair. It seems to be involved in an RecBC-independent recombinational process of DNA repair. It may act with RecF and RecO. The polypeptide is Recombination protein RecR (Desulfosudis oleivorans (strain DSM 6200 / JCM 39069 / Hxd3) (Desulfococcus oleovorans)).